A 172-amino-acid chain; its full sequence is Small integral membrane protein 23 (172 aa).

At M1–T36 the chain is on the cytoplasmic side. The helical; Signal-anchor for type II membrane protein transmembrane segment at L37–G53 threads the bilayer. At S54–L172 the chain is on the extracellular side. Positions L96–L128 form a coiled coil.

The protein resides in the cell membrane. The polypeptide is Small integral membrane protein 23 (SMIM23) (Homo sapiens (Human)).